The following is a 989-amino-acid chain: Translation initiation factor IF-2 (989 aa).

Disordered stretches follow at residues 43 to 219 (KRRR…LQAR) and 234 to 379 (EARR…GGAR). The segment covering 72 to 87 (NTPNKDTAVTQTATKN) has biased composition (polar residues). The segment covering 105–146 (PKPVAAEATAQETSKAAPAAAQPVAEKEAAAPASAEAAKSAA) has biased composition (low complexity). Residues 149–159 (VTDRGAKKTTE) are compositionally biased toward basic and acidic residues. Over residues 160 to 171 (KNGANASGNRPS) the composition is skewed to polar residues. Positions 234-293 (EARRREDRLKQEADLEEQRRIEEKRRLEAEAKVEAEKQAALKEKEKAEAKARAKAEKEAK) are enriched in basic and acidic residues. Low complexity predominate over residues 294-303 (AAQAKTAGAA). A compositionally biased stretch (basic and acidic residues) spans 342-361 (PRREAPRPAMRDRKGEDRRQ). The region spanning 489 to 659 (SRPPVVTIMG…LLQAEMLELK (171 aa)) is the tr-type G domain. The interval 498 to 505 (GHVDHGKT) is G1. GTP is bound at residue 498–505 (GHVDHGKT). Positions 523–527 (GITQH) are G2. The G3 stretch occupies residues 545 to 548 (DTPG). Residues 545-549 (DTPGH) and 599-602 (NKMD) each bind GTP. The tract at residues 599–602 (NKMD) is G4. A G5 region spans residues 635–637 (SAA).

It belongs to the TRAFAC class translation factor GTPase superfamily. Classic translation factor GTPase family. IF-2 subfamily.

The protein resides in the cytoplasm. Its function is as follows. One of the essential components for the initiation of protein synthesis. Protects formylmethionyl-tRNA from spontaneous hydrolysis and promotes its binding to the 30S ribosomal subunits. Also involved in the hydrolysis of GTP during the formation of the 70S ribosomal complex. The sequence is that of Translation initiation factor IF-2 from Zymomonas mobilis subsp. mobilis (strain ATCC 31821 / ZM4 / CP4).